The sequence spans 392 residues: Phosphopentomutase (392 aa).

Mn(2+) contacts are provided by Asp15, Asp287, His292, Asp328, His329, and His340.

Belongs to the phosphopentomutase family. Mn(2+) is required as a cofactor.

It localises to the cytoplasm. The enzyme catalyses 2-deoxy-alpha-D-ribose 1-phosphate = 2-deoxy-D-ribose 5-phosphate. It catalyses the reaction alpha-D-ribose 1-phosphate = D-ribose 5-phosphate. Its pathway is carbohydrate degradation; 2-deoxy-D-ribose 1-phosphate degradation; D-glyceraldehyde 3-phosphate and acetaldehyde from 2-deoxy-alpha-D-ribose 1-phosphate: step 1/2. Isomerase that catalyzes the conversion of deoxy-ribose 1-phosphate (dRib-1-P) and ribose 1-phosphate (Rib-1-P) to deoxy-ribose 5-phosphate (dRib-5-P) and ribose 5-phosphate (Rib-5-P), respectively. The protein is Phosphopentomutase of Syntrophotalea carbinolica (strain DSM 2380 / NBRC 103641 / GraBd1) (Pelobacter carbinolicus).